A 492-amino-acid polypeptide reads, in one-letter code: Probable cytochrome P450 516B1 (492 aa).

A helical membrane pass occupies residues 1–17 (MYLILSLIIFLAYVAFH). A heme-binding site is contributed by C438.

It belongs to the cytochrome P450 family. The cofactor is heme.

It localises to the membrane. The chain is Probable cytochrome P450 516B1 (cyp516B1) from Dictyostelium discoideum (Social amoeba).